The primary structure comprises 492 residues: Protein nucleotidyltransferase YdiU (492 aa).

8 residues coordinate ATP: Gly101, Gly103, Arg104, Lys124, Asp136, Gly137, Arg187, and Arg194. The active-site Proton acceptor is the Asp268. Positions 269 and 278 each coordinate Mg(2+). Asp278 is a binding site for ATP.

This sequence belongs to the SELO family. Mg(2+) serves as cofactor. The cofactor is Mn(2+).

The enzyme catalyses L-seryl-[protein] + ATP = 3-O-(5'-adenylyl)-L-seryl-[protein] + diphosphate. The catalysed reaction is L-threonyl-[protein] + ATP = 3-O-(5'-adenylyl)-L-threonyl-[protein] + diphosphate. It catalyses the reaction L-tyrosyl-[protein] + ATP = O-(5'-adenylyl)-L-tyrosyl-[protein] + diphosphate. It carries out the reaction L-histidyl-[protein] + UTP = N(tele)-(5'-uridylyl)-L-histidyl-[protein] + diphosphate. The enzyme catalyses L-seryl-[protein] + UTP = O-(5'-uridylyl)-L-seryl-[protein] + diphosphate. The catalysed reaction is L-tyrosyl-[protein] + UTP = O-(5'-uridylyl)-L-tyrosyl-[protein] + diphosphate. In terms of biological role, nucleotidyltransferase involved in the post-translational modification of proteins. It can catalyze the addition of adenosine monophosphate (AMP) or uridine monophosphate (UMP) to a protein, resulting in modifications known as AMPylation and UMPylation. The chain is Protein nucleotidyltransferase YdiU from Corynebacterium efficiens (strain DSM 44549 / YS-314 / AJ 12310 / JCM 11189 / NBRC 100395).